The chain runs to 252 residues: MNNLSPPSTVDILEQVYQVIQQRKSAPDPEASYVAKLFHKGDDAILKKVGEEATELVLAIKGRAARNEVAHEAADLIFHTLVGLAIMNIPPTEVMNVLSSRFGKTGLTRNQTPSVELEPSRRQFERRLHSKTIHLIFSSGITIDGLTRDISLDGMQLHVDYADKVRLLGEKGYFELSVQNKATFNANNLLVGLEIPTTMDNNPLMAAVHSARTYRFEFEIVRVTEDAIGLRIIGDKGMFSFALANEVFNDLM.

Belongs to the PRA-PH family.

The protein localises to the cytoplasm. It catalyses the reaction 1-(5-phospho-beta-D-ribosyl)-ATP + H2O = 1-(5-phospho-beta-D-ribosyl)-5'-AMP + diphosphate + H(+). The protein operates within amino-acid biosynthesis; L-histidine biosynthesis; L-histidine from 5-phospho-alpha-D-ribose 1-diphosphate: step 2/9. This is Phosphoribosyl-ATP pyrophosphatase from Magnetococcus marinus (strain ATCC BAA-1437 / JCM 17883 / MC-1).